The primary structure comprises 420 residues: Ribosome biogenesis protein WDR12 homolog (420 aa).

The tract at residues 10–92 (VQVHLKTKQE…EDAIEIEYVE (83 aa)) is ubiquitin-like (UBL) domain. WD repeat units follow at residues 104 to 142 (LHDD…LTIS), 143 to 185 (GHTA…NSVE), 192 to 231 (GHER…AVEG), 250 to 288 (GHRE…IKTE), 290 to 329 (STNK…GSVV), 335 to 375 (GHNA…APLY), and 379 to 417 (GHGE…ADDA).

It belongs to the WD repeat WDR12/YTM1 family.

The protein resides in the nucleus. It is found in the nucleolus. The protein localises to the nucleoplasm. Required for maturation of ribosomal RNAs and formation of the large ribosomal subunit. The sequence is that of Ribosome biogenesis protein WDR12 homolog from Drosophila yakuba (Fruit fly).